Reading from the N-terminus, the 344-residue chain is Putative cyclin-Y-like protein 3 (344 aa).

The 131-residue stretch at 40–170 (ERYANRSLAI…FLELLEFNIH (131 aa)) folds into the Cyclin N-terminal domain.

The protein belongs to the cyclin family. Cyclin Y subfamily.

The chain is Putative cyclin-Y-like protein 3 (CCNYL3) from Homo sapiens (Human).